We begin with the raw amino-acid sequence, 210 residues long: HTH-type transcriptional repressor FabR (210 aa).

The HTH tetR-type domain maps to 10 to 70 (KTRRSLVEAA…TMVDESGLML (61 aa)). Positions 33–52 (SLREVAREAGIAPTSFYRHF) form a DNA-binding region, H-T-H motif.

As to quaternary structure, homodimer.

It is found in the cytoplasm. Represses the transcription of fabB, involved in unsaturated fatty acid (UFA) biosynthesis. By controlling UFA production, FabR directly influences the physical properties of the membrane bilayer. The polypeptide is HTH-type transcriptional repressor FabR (Salmonella paratyphi A (strain ATCC 9150 / SARB42)).